A 358-amino-acid polypeptide reads, in one-letter code: 3-dehydroquinate synthase (358 aa).

NAD(+) contacts are provided by residues 102-106 (GVVGD), 126-127 (TT), Lys138, and Lys147. The Zn(2+) site is built by Glu180, His243, and His260.

The protein belongs to the sugar phosphate cyclases superfamily. Dehydroquinate synthase family. Co(2+) is required as a cofactor. It depends on Zn(2+) as a cofactor. Requires NAD(+) as cofactor.

It localises to the cytoplasm. It catalyses the reaction 7-phospho-2-dehydro-3-deoxy-D-arabino-heptonate = 3-dehydroquinate + phosphate. Its pathway is metabolic intermediate biosynthesis; chorismate biosynthesis; chorismate from D-erythrose 4-phosphate and phosphoenolpyruvate: step 2/7. Functionally, catalyzes the conversion of 3-deoxy-D-arabino-heptulosonate 7-phosphate (DAHP) to dehydroquinate (DHQ). The chain is 3-dehydroquinate synthase from Shouchella clausii (strain KSM-K16) (Alkalihalobacillus clausii).